We begin with the raw amino-acid sequence, 513 residues long: ATP synthase subunit alpha (513 aa).

Residue 169–176 (GDRQTGKT) participates in ATP binding.

The protein belongs to the ATPase alpha/beta chains family. As to quaternary structure, F-type ATPases have 2 components, CF(1) - the catalytic core - and CF(0) - the membrane proton channel. CF(1) has five subunits: alpha(3), beta(3), gamma(1), delta(1), epsilon(1). CF(0) has three main subunits: a(1), b(2) and c(9-12). The alpha and beta chains form an alternating ring which encloses part of the gamma chain. CF(1) is attached to CF(0) by a central stalk formed by the gamma and epsilon chains, while a peripheral stalk is formed by the delta and b chains.

Its subcellular location is the cell inner membrane. The catalysed reaction is ATP + H2O + 4 H(+)(in) = ADP + phosphate + 5 H(+)(out). Functionally, produces ATP from ADP in the presence of a proton gradient across the membrane. The alpha chain is a regulatory subunit. The polypeptide is ATP synthase subunit alpha (Klebsiella pneumoniae (strain 342)).